We begin with the raw amino-acid sequence, 374 residues long: Quinolinate synthase (374 aa).

Residues His53 and Ser70 each contribute to the iminosuccinate site. Cys116 contributes to the [4Fe-4S] cluster binding site. Iminosuccinate-binding positions include 148 to 150 and Ser169; that span reads YMN. A [4Fe-4S] cluster-binding site is contributed by Cys236. Iminosuccinate contacts are provided by residues 262–264 and Thr279; that span reads HPE. Position 327 (Cys327) interacts with [4Fe-4S] cluster.

It belongs to the quinolinate synthase family. Type 3 subfamily. The cofactor is [4Fe-4S] cluster.

Its subcellular location is the cytoplasm. It catalyses the reaction iminosuccinate + dihydroxyacetone phosphate = quinolinate + phosphate + 2 H2O + H(+). Its pathway is cofactor biosynthesis; NAD(+) biosynthesis; quinolinate from iminoaspartate: step 1/1. Its function is as follows. Catalyzes the condensation of iminoaspartate with dihydroxyacetone phosphate to form quinolinate. This Halobacterium salinarum (strain ATCC 29341 / DSM 671 / R1) protein is Quinolinate synthase.